The sequence spans 399 residues: 3-methyl-2-oxobutanoate hydroxymethyltransferase 2, mitochondrial (399 aa).

Residues 1–90 constitute a mitochondrion transit peptide; that stretch reads MSFSRLLTPR…ARRVTLATLR (90 aa). Positions 125 and 164 each coordinate Mg(2+). Residues 125-126, D164, and K194 contribute to the 3-methyl-2-oxobutanoate site; that span reads DS. Mg(2+) is bound at residue E196. The active-site Proton acceptor is the E264.

This sequence belongs to the PanB family. Mg(2+) serves as cofactor.

The protein resides in the mitochondrion. It catalyses the reaction 3-methyl-2-oxobutanoate + (6R)-5,10-methylene-5,6,7,8-tetrahydrofolate + H2O = 2-dehydropantoate + (6S)-5,6,7,8-tetrahydrofolate. Its pathway is cofactor biosynthesis; (R)-pantothenate biosynthesis; (R)-pantoate from 3-methyl-2-oxobutanoate: step 1/2. Catalyzes the reversible reaction in which hydroxymethyl group from 5,10-methylenetetrahydrofolate is transferred onto alpha-ketoisovalerate to form ketopantoate. This chain is 3-methyl-2-oxobutanoate hydroxymethyltransferase 2, mitochondrial (KPHMT2), found in Oryza sativa subsp. japonica (Rice).